The primary structure comprises 228 residues: Cytidylate kinase (228 aa).

An ATP-binding site is contributed by glycine 17 to threonine 25.

This sequence belongs to the cytidylate kinase family. Type 1 subfamily.

Its subcellular location is the cytoplasm. The catalysed reaction is CMP + ATP = CDP + ADP. It catalyses the reaction dCMP + ATP = dCDP + ADP. This is Cytidylate kinase from Burkholderia ambifaria (strain MC40-6).